A 169-amino-acid chain; its full sequence is 2-C-methyl-D-erythritol 2,4-cyclodiphosphate synthase (169 aa).

Aspartate 13 and histidine 15 together coordinate a divalent metal cation. Residues 13–15 (DVH) and 39–40 (HS) each bind 4-CDP-2-C-methyl-D-erythritol 2-phosphate. Histidine 47 is an a divalent metal cation binding site. 4-CDP-2-C-methyl-D-erythritol 2-phosphate contacts are provided by residues 61-63 (DIG), 66-70 (FPDTD), phenylalanine 144, and arginine 147.

The protein belongs to the IspF family. As to quaternary structure, homotrimer. A divalent metal cation serves as cofactor.

The enzyme catalyses 4-CDP-2-C-methyl-D-erythritol 2-phosphate = 2-C-methyl-D-erythritol 2,4-cyclic diphosphate + CMP. Its pathway is isoprenoid biosynthesis; isopentenyl diphosphate biosynthesis via DXP pathway; isopentenyl diphosphate from 1-deoxy-D-xylulose 5-phosphate: step 4/6. In terms of biological role, involved in the biosynthesis of isopentenyl diphosphate (IPP) and dimethylallyl diphosphate (DMAPP), two major building blocks of isoprenoid compounds. Catalyzes the conversion of 4-diphosphocytidyl-2-C-methyl-D-erythritol 2-phosphate (CDP-ME2P) to 2-C-methyl-D-erythritol 2,4-cyclodiphosphate (ME-CPP) with a corresponding release of cytidine 5-monophosphate (CMP). This is 2-C-methyl-D-erythritol 2,4-cyclodiphosphate synthase from Cupriavidus pinatubonensis (strain JMP 134 / LMG 1197) (Cupriavidus necator (strain JMP 134)).